A 365-amino-acid chain; its full sequence is Chloroplast protein FOR GROWTH AND FERTILITY 1 (365 aa).

2 disordered regions span residues 1 to 30 (MERL…LPRL) and 62 to 90 (YTPI…PGFL). The N-terminal 79 residues, 1–79 (MERLLQPSSS…TNNSFNGSPK (79 aa)), are a transit peptide targeting the chloroplast. 2 stretches are compositionally biased toward low complexity: residues 7–24 (PSSS…SRTS) and 62–77 (YTPI…FNGS). The next 7 membrane-spanning stretches (helical) occupy residues 109–129 (VILI…PPAF), 139–159 (GWLT…LSGP), 182–202 (ALWG…FLLL), 218–238 (IVGL…SEIP), 274–294 (GVVH…LALP), 301–321 (AFLI…TAFI), and 345–365 (LVAI…FSLY).

In terms of tissue distribution, mostly expressed in leaves and flowers, to a lower extent, in stems, roots, floral bud, inflorescence and siliques, and, barely, in seedlings.

The protein localises to the plastid. Its subcellular location is the chloroplast membrane. It localises to the plastid membrane. Together with CGF2, essential protein which supports female gametogenesis and embryogenesis, probably by securing local energy supply. This Arabidopsis thaliana (Mouse-ear cress) protein is Chloroplast protein FOR GROWTH AND FERTILITY 1.